The primary structure comprises 299 residues: Ribosomal RNA small subunit methyltransferase H (299 aa).

S-adenosyl-L-methionine contacts are provided by residues 45-47 (GGH), D64, F92, D108, and Q115. Residues 275–299 (PQSDEQAKNPRSRSAKLRLAQRKEQ) are disordered. Positions 284–299 (PRSRSAKLRLAQRKEQ) are enriched in basic residues.

It belongs to the methyltransferase superfamily. RsmH family.

Its subcellular location is the cytoplasm. It carries out the reaction cytidine(1402) in 16S rRNA + S-adenosyl-L-methionine = N(4)-methylcytidine(1402) in 16S rRNA + S-adenosyl-L-homocysteine + H(+). Functionally, specifically methylates the N4 position of cytidine in position 1402 (C1402) of 16S rRNA. The chain is Ribosomal RNA small subunit methyltransferase H from Gloeothece citriformis (strain PCC 7424) (Cyanothece sp. (strain PCC 7424)).